A 500-amino-acid chain; its full sequence is Glycerol kinase (500 aa).

Thr-12 lines the ADP pocket. ATP is bound by residues Thr-12, Thr-13, and Ser-14. Thr-12 lines the sn-glycerol 3-phosphate pocket. Arg-16 contributes to the ADP binding site. Arg-82, Glu-83, Tyr-134, and Asp-243 together coordinate sn-glycerol 3-phosphate. The glycerol site is built by Arg-82, Glu-83, Tyr-134, Asp-243, and Gln-244. Thr-265 and Gly-308 together coordinate ADP. Residues Thr-265, Gly-308, Gln-312, and Gly-411 each coordinate ATP. Gly-411 serves as a coordination point for ADP.

It belongs to the FGGY kinase family.

It carries out the reaction glycerol + ATP = sn-glycerol 3-phosphate + ADP + H(+). Its pathway is polyol metabolism; glycerol degradation via glycerol kinase pathway; sn-glycerol 3-phosphate from glycerol: step 1/1. With respect to regulation, inhibited by fructose 1,6-bisphosphate (FBP). Functionally, key enzyme in the regulation of glycerol uptake and metabolism. Catalyzes the phosphorylation of glycerol to yield sn-glycerol 3-phosphate. The polypeptide is Glycerol kinase (Chelativorans sp. (strain BNC1)).